A 482-amino-acid chain; its full sequence is UDP-N-acetylmuramate--L-alanine ligase (482 aa).

An ATP-binding site is contributed by 123 to 129 (GTHGKTT).

This sequence belongs to the MurCDEF family.

The protein localises to the cytoplasm. The enzyme catalyses UDP-N-acetyl-alpha-D-muramate + L-alanine + ATP = UDP-N-acetyl-alpha-D-muramoyl-L-alanine + ADP + phosphate + H(+). Its pathway is cell wall biogenesis; peptidoglycan biosynthesis. In terms of biological role, cell wall formation. The polypeptide is UDP-N-acetylmuramate--L-alanine ligase (Pseudomonas entomophila (strain L48)).